Reading from the N-terminus, the 317-residue chain is TPR repeat-containing thioredoxin TDX (317 aa).

The disordered stretch occupies residues 1-48; sequence MATAGASSFEDEIMESDIELEGEAVEPDNDPPQKMGDPSVEVSDEKRD. The span at 9 to 29 shows a compositional bias: acidic residues; it reads FEDEIMESDIELEGEAVEPDN. TPR repeat units follow at residues 50-83, 85-117, and 119-151; these read AQLC…NPTS, IAYA…NPDS, and KGYK…DYDE. A Thioredoxin domain is found at 189–316; sequence EKQRKHAEEV…LERKVAQHGS (128 aa). Catalysis depends on nucleophile residues Cys-242 and Cys-245. Cys-242 and Cys-245 are oxidised to a cystine.

Belongs to the thioredoxin family.

Functionally, probable thiol-disulfide oxidoreductase that may participate in various redox reactions and act as chaperone under heat shock. May interact with HSP70 proteins through the TPR repeats. In Oryza sativa subsp. japonica (Rice), this protein is TPR repeat-containing thioredoxin TDX.